A 411-amino-acid chain; its full sequence is Serine hydroxymethyltransferase (411 aa).

(6S)-5,6,7,8-tetrahydrofolate is bound by residues Leu-113 and 117 to 119; that span reads GHL. At Lys-222 the chain carries N6-(pyridoxal phosphate)lysine. (6S)-5,6,7,8-tetrahydrofolate is bound by residues Glu-238 and 346–348; that span reads SPF.

It belongs to the SHMT family. As to quaternary structure, homodimer. The cofactor is pyridoxal 5'-phosphate.

The protein localises to the cytoplasm. It catalyses the reaction (6R)-5,10-methylene-5,6,7,8-tetrahydrofolate + glycine + H2O = (6S)-5,6,7,8-tetrahydrofolate + L-serine. Its pathway is one-carbon metabolism; tetrahydrofolate interconversion. It functions in the pathway amino-acid biosynthesis; glycine biosynthesis; glycine from L-serine: step 1/1. Its function is as follows. Catalyzes the reversible interconversion of serine and glycine with tetrahydrofolate (THF) serving as the one-carbon carrier. This reaction serves as the major source of one-carbon groups required for the biosynthesis of purines, thymidylate, methionine, and other important biomolecules. Also exhibits THF-independent aldolase activity toward beta-hydroxyamino acids, producing glycine and aldehydes, via a retro-aldol mechanism. This Prochlorococcus marinus (strain NATL1A) protein is Serine hydroxymethyltransferase.